The primary structure comprises 73 residues: U3-agatoxin-Ao1j (73 aa).

A signal peptide spans 1–20 (MRTIISLLLLSAMVFAVIEA). Residues 21 to 34 (ISLEEGLQLFEGER) constitute a propeptide that is removed on maturation. Cystine bridges form between cysteine 36-cysteine 52, cysteine 43-cysteine 57, cysteine 51-cysteine 67, and cysteine 59-cysteine 65. At serine 71 the chain carries Serine amide.

The protein belongs to the neurotoxin 07 (Beta/delta-agtx) family. 03 (aga-4) subfamily. Aga sub-subfamily. Expressed by the venom gland.

The protein resides in the secreted. In terms of biological role, insecticidal neurotoxin that induces an irreversible spastic paralysis when injected into insects. Modifies presynaptic voltage-gated sodium channels (Nav), causing them to open at the normal resting potential of the nerve. This leads to spontaneous release of neurotransmitter and repetitive action potentials in motor neurons. The sequence is that of U3-agatoxin-Ao1j from Agelena orientalis (Funnel-web spider).